Consider the following 644-residue polypeptide: Threonine--tRNA ligase (644 aa).

One can recognise a TGS domain in the interval 1 to 61; that stretch reads MINVTLPDGS…DGDAQVAIIT (61 aa). Residues 243–536 are catalytic; the sequence is DHRKLGKQME…LIESYAGKLP (294 aa). Zn(2+) contacts are provided by cysteine 336, histidine 387, and histidine 513.

It belongs to the class-II aminoacyl-tRNA synthetase family. In terms of assembly, homodimer. The cofactor is Zn(2+).

The protein localises to the cytoplasm. The enzyme catalyses tRNA(Thr) + L-threonine + ATP = L-threonyl-tRNA(Thr) + AMP + diphosphate + H(+). Its function is as follows. Catalyzes the attachment of threonine to tRNA(Thr) in a two-step reaction: L-threonine is first activated by ATP to form Thr-AMP and then transferred to the acceptor end of tRNA(Thr). Also edits incorrectly charged L-seryl-tRNA(Thr). The protein is Threonine--tRNA ligase of Maricaulis maris (strain MCS10) (Caulobacter maris).